Reading from the N-terminus, the 61-residue chain is Small ribosomal subunit protein uS14 (61 aa).

Zn(2+) is bound by residues cysteine 24, cysteine 27, cysteine 40, and cysteine 43.

This sequence belongs to the universal ribosomal protein uS14 family. Zinc-binding uS14 subfamily. Part of the 30S ribosomal subunit. Contacts proteins S3 and S10. Zn(2+) serves as cofactor.

Functionally, binds 16S rRNA, required for the assembly of 30S particles and may also be responsible for determining the conformation of the 16S rRNA at the A site. The protein is Small ribosomal subunit protein uS14 of Rubrobacter xylanophilus (strain DSM 9941 / JCM 11954 / NBRC 16129 / PRD-1).